A 196-amino-acid chain; its full sequence is MHSPSTLPSIPIVTDLAALPGDHLQSVTLCCPSCEGLGGSAYDSLVLLPIHDANERLLSELRKGVLSESQVFAGVFALDPFRRHVDILKALETAGCHRVVNFPSVTAIDGEMRASLEDFGYGVTAEMNLLRTAIAKGFSTLAVVDSFGMAQEAVAIGVSGLIAARHANDAMLAEFSELAHETSLGLFRLPDAVGGT.

This is an uncharacterized protein from Sinorhizobium fredii (strain NBRC 101917 / NGR234).